A 215-amino-acid chain; its full sequence is Adenylate kinase (215 aa).

An ATP-binding site is contributed by 10–15; the sequence is GAGKGT. Residues 30–59 are NMP; it reads STGDMLRAAVKAGTPIGLKAKAVMEAGELV. Residues T31, R36, 57 to 59, 85 to 88, and Q92 each bind AMP; these read ELV and GYPR. Positions 126-163 are LID; sequence GRYTCANCGEGYHDRFKQPKVAGVCDVCGSAEFKRRPD. R127 is a binding site for ATP. Zn(2+) is bound by residues C130, C133, C150, and C153. R160 and R172 together coordinate AMP. An ATP-binding site is contributed by A200.

Belongs to the adenylate kinase family. In terms of assembly, monomer.

Its subcellular location is the cytoplasm. The enzyme catalyses AMP + ATP = 2 ADP. It functions in the pathway purine metabolism; AMP biosynthesis via salvage pathway; AMP from ADP: step 1/1. Its function is as follows. Catalyzes the reversible transfer of the terminal phosphate group between ATP and AMP. Plays an important role in cellular energy homeostasis and in adenine nucleotide metabolism. The polypeptide is Adenylate kinase (Rhizorhabdus wittichii (strain DSM 6014 / CCUG 31198 / JCM 15750 / NBRC 105917 / EY 4224 / RW1) (Sphingomonas wittichii)).